Consider the following 309-residue polypeptide: Ornithine carbamoyltransferase (309 aa).

Carbamoyl phosphate-binding positions include 51-54 (STRT), Gln-78, Arg-102, and 129-132 (HPVQ). L-ornithine-binding positions include Asn-160, Asp-224, and 228 to 229 (SM). Residues 264 to 265 (CL) and Arg-292 each bind carbamoyl phosphate.

Belongs to the aspartate/ornithine carbamoyltransferase superfamily. OTCase family.

The protein localises to the cytoplasm. It carries out the reaction carbamoyl phosphate + L-ornithine = L-citrulline + phosphate + H(+). It functions in the pathway amino-acid biosynthesis; L-arginine biosynthesis; L-arginine from L-ornithine and carbamoyl phosphate: step 1/3. In terms of biological role, reversibly catalyzes the transfer of the carbamoyl group from carbamoyl phosphate (CP) to the N(epsilon) atom of ornithine (ORN) to produce L-citrulline. The protein is Ornithine carbamoyltransferase of Campylobacter fetus subsp. fetus (strain 82-40).